Consider the following 521-residue polypeptide: Cytochrome P450 monooxygenase ARMGADRAFT_1018420 (521 aa).

A helical membrane pass occupies residues 9–26; the sequence is VSPIWILTAIVVVAYTTV. Cysteine 443 contributes to the heme binding site. Asparagine 450 carries an N-linked (GlcNAc...) asparagine glycan.

This sequence belongs to the cytochrome P450 family. It depends on heme as a cofactor.

The protein resides in the membrane. The protein operates within secondary metabolite biosynthesis. Functionally, cytochrome P450 monooxygenase, part of the gene cluster that mediates the biosynthesis of melleolides, a range of antifungal and phytotoxic polyketide derivatives composed of an orsellinic acid (OA) moiety esterified to various sesquiterpene alcohols. The first step in melleolides biosynthesis is performed by the delta(6)-protoilludene synthase PRO1 which catalyzes the cyclization of farnesyl diphosphate to protoilludene. The orsellinic acid synthase armB produces OA by condensing acetyl-CoA with 3 malonyl-CoA units in a three-round chain elongation reaction folowed by a C2-C7 ring closure. ArmB further catalyzes the trans-esterification of OA to the various sesquiterpene alcohols resulting from the hydroxylation of protoilludene. The melleolides cluster also includes 5 cytochrome P450 monooxygenases, 4 NAD(+)-dependent oxidoreductases, one flavin-dependent oxidoreductase, and one O-methyltransferase. The cytochrome P450 monooxygenases may be involved in protoilludene hydroxylation to elaborate melleolides with multiple alcohol groups, such as melleolide D, which carries alcohol functionalities at C-4, C-5, C-10, and C-13. The role of the NAD(+)-dependent enzymes remains unknown. Numerous melleolides, including arnamial, show 5'-O-methylation of the aromatic moiety which may be catalyzed by the methyltransferase encoded in the cluster. The flavin-dependent oxidoreductase might represent the dehydrogenase yielding the aldehyde in position 1 of arnamial and other melleolides. Finally, several halogenase localized outside of the cluster, are able to catalyze the transfer of a single chlorine atom to the melleolide backbone, resulting in a 6'-chloromelleolide product. The sequence is that of Cytochrome P450 monooxygenase ARMGADRAFT_1018420 from Armillaria gallica (Bulbous honey fungus).